A 527-amino-acid polypeptide reads, in one-letter code: Catalase (527 aa).

Ala-2 carries the N-acetylalanine modification. Ser-9 carries the post-translational modification Phosphoserine. N6-succinyllysine is present on Lys-13. Active-site residues include His-75 and Asn-148. Residues His-194, Ser-201, Arg-203, and Asn-213 each coordinate NADP(+). Lys-221 carries the post-translational modification N6-succinyllysine. Lys-233 is subject to N6-acetyllysine. The NADP(+) site is built by Lys-237, Trp-303, His-305, and Lys-306. The residue at position 306 (Lys-306) is an N6-acetyllysine; alternate. Lys-306 carries the N6-succinyllysine; alternate modification. Tyr-358 contacts heme. 2 positions are modified to phosphoserine: Ser-417 and Ser-422. Lys-480 carries the N6-acetyllysine; alternate modification. Lys-480 is subject to N6-succinyllysine; alternate. An N6-acetyllysine modification is found at Lys-499. The residue at position 511 (Thr-511) is a Phosphothreonine. Ser-515 and Ser-517 each carry phosphoserine. The Microbody targeting signal; atypical signature appears at 524-527 (KANL).

The protein belongs to the catalase family. Homotetramer. Interacts (via microbody targeting signal) with PEX5, monomeric form interacts with PEX5, leading to its translocation into peroxisomes. The cofactor is heme. NADP(+) is required as a cofactor.

It localises to the peroxisome matrix. It carries out the reaction 2 H2O2 = O2 + 2 H2O. Functionally, catalyzes the degradation of hydrogen peroxide (H(2)O(2)) generated by peroxisomal oxidases to water and oxygen, thereby protecting cells from the toxic effects of hydrogen peroxide. Promotes growth of cells including T-cells, B-cells, myeloid leukemia cells, melanoma cells, mastocytoma cells and normal and transformed fibroblast cells. The polypeptide is Catalase (CAT) (Pongo abelii (Sumatran orangutan)).